We begin with the raw amino-acid sequence, 688 residues long: PTS system glucoside-specific EIICBA component (688 aa).

Residues 3 to 427 (KKLFGQLQRI…FKLKTPGRED (425 aa)) form the PTS EIIC type-1 domain. A run of 10 helical transmembrane segments spans residues 12-32 (IGKA…LLAF), 81-101 (LGLA…YLIM), 137-157 (LVLG…MGAL), 182-202 (FVPI…SFAW), 223-243 (LTTF…LHHI), 284-304 (AFTT…AFAI), 315-335 (VVGG…ITEP), 340-360 (FLFV…TSFL), 364-384 (LLGV…ILYG), and 395-415 (LVIP…DFAI). The 82-residue stretch at 438–519 (AKLPFDVLDA…AKIMSGEITK (82 aa)) folds into the PTS EIIB type-1 domain. Cys-460 acts as the Phosphocysteine intermediate; for EIIB activity in catalysis. A PTS EIIA type-1 domain is found at 560–664 (DQVFAGKMMG…SIVTPMIITN (105 aa)). The active-site Tele-phosphohistidine intermediate; for EIIA activity is His-612.

It is found in the cell membrane. Its function is as follows. The phosphoenolpyruvate-dependent sugar phosphotransferase system (sugar PTS), a major carbohydrate active -transport system, catalyzes the phosphorylation of incoming sugar substrates concomitantly with their translocation across the cell membrane. This system is involved in alpha- and beta-glucoside transport. The protein is PTS system glucoside-specific EIICBA component (glcB) of Staphylococcus aureus (strain Mu3 / ATCC 700698).